Consider the following 581-residue polypeptide: NADH-quinone oxidoreductase subunit C/D (581 aa).

Residues 1-172 are NADH dehydrogenase I subunit C; the sequence is MSGTDLVSEL…PLFNMTAALF (172 aa). The segment at 196-581 is NADH dehydrogenase I subunit D; that stretch reads ELMILNYGPH…IDYVMSDVDR (386 aa).

In the N-terminal section; belongs to the complex I 30 kDa subunit family. It in the C-terminal section; belongs to the complex I 49 kDa subunit family. In terms of assembly, NDH-1 is composed of 13 different subunits. Subunits NuoB, CD, E, F, and G constitute the peripheral sector of the complex.

Its subcellular location is the cell inner membrane. The enzyme catalyses a quinone + NADH + 5 H(+)(in) = a quinol + NAD(+) + 4 H(+)(out). Its function is as follows. NDH-1 shuttles electrons from NADH, via FMN and iron-sulfur (Fe-S) centers, to quinones in the respiratory chain. The immediate electron acceptor for the enzyme in this species is believed to be ubiquinone. Couples the redox reaction to proton translocation (for every two electrons transferred, four hydrogen ions are translocated across the cytoplasmic membrane), and thus conserves the redox energy in a proton gradient. This chain is NADH-quinone oxidoreductase subunit C/D, found in Rhodopseudomonas palustris (strain BisB5).